The sequence spans 74 residues: U12-theraphotoxin-Hs1a (74 aa).

A signal peptide spans 1 to 20 (MNVKILLLLVGLNLVMHSNA). Residues 21-40 (TGDSETNPAETLFIEEIFRR) constitute a propeptide that is removed on maturation. 3 cysteine pairs are disulfide-bonded: Cys-42-Cys-56, Cys-49-Cys-61, and Cys-55-Cys-71.

It belongs to the neurotoxin 35 family. In terms of tissue distribution, expressed by the venom gland.

It is found in the secreted. In terms of biological role, putative ion channel inhibitor. In Cyriopagopus schmidti (Chinese bird spider), this protein is U12-theraphotoxin-Hs1a.